The sequence spans 804 residues: Serine/threonine-protein kinase ATG1 (804 aa).

The region spanning 12–308 is the Protein kinase domain; the sequence is FTIGPEIGRG…FQEFFNDPLI (297 aa). Residues 18–26 and lysine 41 each bind ATP; that span reads IGRGSFANV. Aspartate 158 serves as the catalytic Proton acceptor. Disordered regions lie at residues 339–364, 395–415, and 455–506; these read TSPP…ERAP, INKS…KGAR, and PSPH…MPIS. A compositionally biased stretch (basic and acidic residues) spans 404–415; sequence TVKDGQIKKGAR. Over residues 462–495 the composition is skewed to polar residues; that stretch reads NEHSAANPSGPTETQTQRRFSPSSRTSSIGSNRR.

Belongs to the protein kinase superfamily. Ser/Thr protein kinase family. APG1/unc-51/ULK1 subfamily. In terms of assembly, homodimer. Forms a ternary complex with ATG13 and ATG17.

It localises to the cytoplasm. The protein localises to the preautophagosomal structure membrane. The enzyme catalyses L-seryl-[protein] + ATP = O-phospho-L-seryl-[protein] + ADP + H(+). It carries out the reaction L-threonyl-[protein] + ATP = O-phospho-L-threonyl-[protein] + ADP + H(+). Its function is as follows. Serine/threonine protein kinase involved in the cytoplasm to vacuole transport (Cvt) and found to be essential in autophagy, where it is required for the formation of autophagosomes. Involved in the clearance of protein aggregates which cannot be efficiently cleared by the proteasome. Required for selective autophagic degradation of the nucleus (nucleophagy) as well as for mitophagy which contributes to regulate mitochondrial quantity and quality by eliminating the mitochondria to a basal level to fulfill cellular energy requirements and preventing excess ROS production. Also involved in endoplasmic reticulum-specific autophagic process, in selective removal of ER-associated degradation (ERAD) substrates. Plays a key role in ATG9 and ATG23 cycling through the pre-autophagosomal structure and is necessary to promote ATG18 binding to ATG9 through phosphorylation of ATG9. Catalyzes phosphorylation of ATG4, decreasing the interaction between ATG4 and ATG8 and impairing deconjugation of PE-conjugated forms of ATG8. The chain is Serine/threonine-protein kinase ATG1 from Pichia angusta (Yeast).